Here is a 338-residue protein sequence, read N- to C-terminus: Large ribosomal subunit protein uL3 (338 aa).

Over residues 228-237 (HKHRKGHRRT) the composition is skewed to basic residues. Residues 228–255 (HKHRKGHRRTGTIGPQAPALMFTQPRPG) form a disordered region.

This sequence belongs to the universal ribosomal protein uL3 family. As to quaternary structure, part of the 50S ribosomal subunit. Forms a cluster with proteins L14 and L24e.

In terms of biological role, one of the primary rRNA binding proteins, it binds directly near the 3'-end of the 23S rRNA, where it nucleates assembly of the 50S subunit. This chain is Large ribosomal subunit protein uL3, found in Pyrobaculum calidifontis (strain DSM 21063 / JCM 11548 / VA1).